A 945-amino-acid chain; its full sequence is Cysteine-rich, acidic integral membrane protein (945 aa).

A disordered region spans residues 1–20 (MGNEAGPIFEESNAEVGTPP). The first 23 residues, 1-23 (MGNEAGPIFEESNAEVGTPPADA), serve as a signal peptide directing secretion. Residues 24 to 882 (VHDDFFFDYK…GKGSSVSAGL (859 aa)) are Extracellular-facing. 2 N-linked (GlcNAc...) asparagine glycosylation sites follow: N34 and N43. 66 consecutive repeat copies span residues 40–51 (DDCNITGDCNET), 52–63 (DDCDITGDCNET), 64–75 (DDCNITGDCNET), 76–87 (DDCNITGDCNET), 88–99 (DDCNITGDCNET), 100–111 (DDCNITGDCNET), 112–123 (DDCDITGDCNET), 124–135 (DDCNITGDCNET), 136–147 (DDCNITGDCNET), 148–159 (DDCNITGDCNET), 160–171 (DDCDITGDCNET), 172–183 (DDCNITGDCNET), 184–195 (DDCDITGDCNET), 196–207 (DDCNITGDCNET), 208–219 (DDCNITGDCNET), 220–231 (DDCNITGDCNET), 232–243 (DDCNITGDCNET), 244–255 (DDCNITGDCNET), 256–267 (DDCNITGDCNET), 268–279 (DDCDITGDCNET), 280–291 (DDCNITGDCNET), 292–303 (DDCNITGDCNET), 304–315 (DDCNITGDCNET), 316–327 (DDCNITGDCNET), 328–339 (DDCNITGDCNET), 340–351 (DDCNITGDCNET), 352–363 (DDCDITGDCNET), 364–375 (DDCNITGDCNET), 376–387 (DDCNITGDCNET), 388–399 (DDCNITGDCNET), 400–411 (DDCNITGDCNET), 412–423 (DDCNITGDCNET), 424–435 (DDCDITGDCNET), 436–447 (DDCNITGDCNET), 448–459 (DDCDITGDCNET), 460–471 (DDCNITGDCNET), 472–483 (DDCNITGDCNET), 484–495 (DDCNITGDCNET), 496–507 (DDCNITGDCNET), 508–519 (DDCNITGDCNET), 520–531 (DDCNITGDCNET), 532–543 (DDCDITGDCNET), 544–555 (DDCNITGDCNET), 556–567 (DDCNITGDCNET), 568–579 (DDCNITGDCNET), 580–591 (DDCNITGDCNET), 592–603 (DDCNITGDCNET), 604–615 (DDCDITGDCNET), 616–627 (DDCNITGDCNET), 628–639 (DDCDITGDCNET), 640–651 (DDCNITGDCNET), 652–663 (DDCNITGDCNET), 664–675 (DDCNITGDCNET), 676–687 (DDCNITGDCNET), 688–699 (DDCNITGDCNET), 700–711 (DDCNITGDCNET), 712–723 (DDCDITGDCNET), 724–735 (DDCNITGDCNET), 736–747 (DDCNITGDCNET), 748–759 (DDCNITGDCNET), 760–771 (DDCNITGDCNET), 772–783 (DDCNITGDCNET), 784–795 (DDCDITGDCNET), 796–807 (DDCNITGDCNET), 808–819 (DDCDITGDCNET), and 820–831 (DDCNITGDCNET). The interval 40-831 (DDCNITGDCN…CNITGDCNET (792 aa)) is 66 X 12 AA tandem repeats of D-D-C-[ND]-I-T-G-D-G-N-E-T. N-linked (GlcNAc...) asparagine glycans are attached at residues N67, N79, N91, and N103. N-linked (GlcNAc...) asparagine glycosylation is found at N127, N139, and N151. Residue N175 is glycosylated (N-linked (GlcNAc...) asparagine). 6 N-linked (GlcNAc...) asparagine glycosylation sites follow: N199, N211, N223, N235, N247, and N259. N283, N295, N307, N319, N331, and N343 each carry an N-linked (GlcNAc...) asparagine glycan. 5 N-linked (GlcNAc...) asparagine glycosylation sites follow: N367, N379, N391, N403, and N415. N439 carries N-linked (GlcNAc...) asparagine glycosylation. N463, N475, N487, N499, N511, and N523 each carry an N-linked (GlcNAc...) asparagine glycan. N-linked (GlcNAc...) asparagine glycosylation is found at N547, N559, N571, N583, and N595. Residue N619 is glycosylated (N-linked (GlcNAc...) asparagine). N-linked (GlcNAc...) asparagine glycans are attached at residues N643, N655, N667, N679, N691, and N703. N727, N739, N751, N763, and N775 each carry an N-linked (GlcNAc...) asparagine glycan. N799 is a glycosylation site (N-linked (GlcNAc...) asparagine). A glycan (N-linked (GlcNAc...) asparagine) is linked at N823. A helical transmembrane segment spans residues 883-903 (LLLAGSTFLVLAVGLSAVLFL). The Cytoplasmic segment spans residues 904–945 (GRERQNAVVICDNEVMMEEVPGCLSDASFAVPVTQSSDEARP).

It is found in the flagellar pocket. The protein resides in the cell membrane. Its function is as follows. Supposed to function as cell surface receptor. Possibly involved in receptor-mediated endocytosis. This Trypanosoma brucei brucei protein is Cysteine-rich, acidic integral membrane protein (CRAM).